The chain runs to 247 residues: Adenosylcobinamide-GDP ribazoletransferase (247 aa).

The next 5 helical transmembrane spans lie at 34 to 54 (IVMF…IFIL), 59 to 79 (CGIP…TGGF), 113 to 133 (GGLA…ELAL), 138 to 158 (VLAA…LLMY), and 194 to 214 (VLLP…AIFI).

Belongs to the CobS family. Requires Mg(2+) as cofactor.

The protein resides in the cell inner membrane. It carries out the reaction alpha-ribazole + adenosylcob(III)inamide-GDP = adenosylcob(III)alamin + GMP + H(+). The enzyme catalyses alpha-ribazole 5'-phosphate + adenosylcob(III)inamide-GDP = adenosylcob(III)alamin 5'-phosphate + GMP + H(+). The protein operates within cofactor biosynthesis; adenosylcobalamin biosynthesis; adenosylcobalamin from cob(II)yrinate a,c-diamide: step 7/7. In terms of biological role, joins adenosylcobinamide-GDP and alpha-ribazole to generate adenosylcobalamin (Ado-cobalamin). Also synthesizes adenosylcobalamin 5'-phosphate from adenosylcobinamide-GDP and alpha-ribazole 5'-phosphate. This is Adenosylcobinamide-GDP ribazoletransferase from Salmonella arizonae (strain ATCC BAA-731 / CDC346-86 / RSK2980).